The chain runs to 465 residues: Keratin, type I cytoskeletal 13 (465 aa).

Over residues M1–K28 the composition is skewed to polar residues. Residues M1–S47 are disordered. Positions M1 to T98 are head. Residues S99 to W135 are coil 1A. The IF rod domain maps to G100–F412. Positions Y136–I154 are linker 1. The coil 1B stretch occupies residues I155–L246. The segment at R247 to K269 is linker 12. The tract at residues L270 to D408 is coil 2. Positions E409–I465 are tail.

Belongs to the intermediate filament family. In terms of assembly, heterotetramer of two type I and two type II keratins. Expressed in skin.

In terms of biological role, type 1 keratin. May maintain oral mucosal cell homeostasis and tissue organization in response to mechanical stress. This Protopterus aethiopicus (Marbled lungfish) protein is Keratin, type I cytoskeletal 13 (KRT13).